Consider the following 359-residue polypeptide: Transcription factor bHLH130 (359 aa).

Serine 60 is subject to Phosphoserine. Residues 161–186 (EEDEESPSNSNGLRRHCSLSSRPPSS) are disordered. The segment covering 167 to 184 (PSNSNGLRRHCSLSSRPP) has biased composition (polar residues). Residues 285 to 335 (CATHPRSIAERVRRTRISERMRKLQELVPNMDKQTNTSDMLDLAVDYIKDL) form the bHLH domain.

Homodimer.

Its subcellular location is the nucleus. This chain is Transcription factor bHLH130 (BHLH130), found in Arabidopsis thaliana (Mouse-ear cress).